The following is a 233-amino-acid chain: MNMMQVMQSVVWAVLLWPCLVSLGVPLECKDEQGSIILCASISKEKLLDRVIQHAELIYRVSEESCTLFEEMFVPFPMRSQRNQAGYTCATKAFPIPGSKSEIQQISDKWLLHSVLILVQSWIEPLVYLQTTLDRYDDAPDTLLKKTKWVSEKLLSLEQGVVVLIRKMLDDDMLTTSYYEQGVAPYALQPEVLESVLRDYTLLSCFKKDAHKMETFLKLLKCRQTDKYSCFLH.

The N-terminal stretch at 1-24 (MNMMQVMQSVVWAVLLWPCLVSLG) is a signal peptide. 3 disulfide bridges follow: Cys-29-Cys-39, Cys-89-Cys-205, and Cys-222-Cys-230.

Belongs to the somatotropin/prolactin family. As to expression, pituitary gland.

The protein resides in the secreted. May be associated with ion regulation and reproduction. In Oncorhynchus keta (Chum salmon), this protein is Somatolactin.